Consider the following 176-residue polypeptide: Large ribosomal subunit protein uL22z (176 aa).

The span at 154–163 (KEEPVKKEPE) shows a compositional bias: basic and acidic residues. The tract at residues 154-176 (KEEPVKKEPETQLAAKSKKGASS) is disordered.

The protein belongs to the universal ribosomal protein uL22 family.

The protein is Large ribosomal subunit protein uL22z (RPL17A) of Arabidopsis thaliana (Mouse-ear cress).